Consider the following 627-residue polypeptide: Coiled-coil domain-containing protein 22 (627 aa).

The segment at 1 to 321 is sufficient for interaction with COMMD1; that stretch reads MEEADRILIH…VADVPATSQR (321 aa). The sufficicient and required for interaction with CCDC93 stretch occupies residues 1-447; it reads MEEADRILIH…LQDCRELESS (447 aa). Ser-410 carries the phosphoserine modification. The stretch at 448-535 forms a coiled coil; the sequence is RRLAEIQELH…NSLSGKLDRT (88 aa).

The protein belongs to the CCDC22 family. In terms of assembly, component of the commander complex consisting of the CCC subcomplex and the retriever subcomplex. Component of the CCC (COMMD/CCDC22/CCDC93) subcomplex consisting of COMMD1, COMMD2, COMMD3, COMMD4, COMMD5, COMMD6, COMMD7, COMMD8, COMMD9, COMMD10, CCDC22 and CCDC93. Forms a coiled-coil heterodimer with CCDC22; this heterodimer interacts with the guanine nucleotide exchange factor DENND10; the interaction is direct. Interacts with CUL1, CUL2, CUL3, SKP1, BTRC. Interacts with SNX17 and SNX31. Interacts with CPNE1 and CPNE4.

The protein resides in the endosome. It is found in the cytoplasm. It localises to the cytoskeleton. The protein localises to the microtubule organizing center. Its subcellular location is the centrosome. Component of the commander complex that is essential for endosomal recycling of transmembrane cargos; the Commander complex is composed of composed of the CCC subcomplex and the retriever subcomplex. Component of the CCC complex, which is involved in the regulation of endosomal recycling of surface proteins, including integrins, signaling receptor and channels. Involved in regulation of NF-kappa-B signaling. Promotes ubiquitination of I-kappa-B-kinase subunit IKBKB and its subsequent proteasomal degradation leading to NF-kappa-B activation; the function may involve association with COMMD8 and a CUL1-dependent E3 ubiquitin ligase complex. May down-regulate NF-kappa-B activity via association with COMMD1 and involving a CUL2-dependent E3 ubiquitin ligase complex. Regulates the cellular localization of COMM domain-containing proteins, such as COMMD1 and COMMD10. Component of the CCC complex, which is involved in the regulation of endosomal recycling of surface proteins, including integrins, signaling receptor and channels. The CCC complex associates with SNX17, retriever and WASH complexes to prevent lysosomal degradation and promote cell surface recycling of numerous cargos such as integrins ITGA5:ITGB1. Plays a role in copper ion homeostasis. Involved in copper-dependent ATP7A trafficking between the trans-Golgi network and vesicles in the cell periphery; the function is proposed to depend on its association within the CCC complex and cooperation with the WASH complex on early endosomes. This Mus musculus (Mouse) protein is Coiled-coil domain-containing protein 22 (Ccdc22).